Here is a 376-residue protein sequence, read N- to C-terminus: T-box transcription factor 18 (376 aa).

Positions 38–63 (STSRPSSSSPPSLPAVSSELLSSSFP) are enriched in low complexity. A disordered region spans residues 38–76 (STSRPSSSSPPSLPAVSSELLSSSFPTNAPESSSRDLAP). A DNA-binding region (T-box) is located at residues 171 to 364 (LANQEQWAKF…GNKYCRTDRK (194 aa)).

The protein resides in the nucleus. In terms of biological role, transcriptional regulator involved in developmental processes. Directly binds to the promoter region of the sex-determining factor xol-1 to activate its transcription. Its activation of xol-1 transcription controls sex determination and X chromosome dosage compensation to promote male development. Has a role in the fox-1-sex-1-mediated determination of sexual fate. This Caenorhabditis elegans protein is T-box transcription factor 18.